Here is a 151-residue protein sequence, read N- to C-terminus: Transcriptional regulator MraZ (151 aa).

SpoVT-AbrB domains follow at residues 5-51 (AHEL…PVAE) and 81-124 (AEIL…GREQ).

It belongs to the MraZ family. As to quaternary structure, forms oligomers.

It is found in the cytoplasm. The protein resides in the nucleoid. This chain is Transcriptional regulator MraZ, found in Neisseria gonorrhoeae (strain ATCC 700825 / FA 1090).